The following is a 215-amino-acid chain: Pyrrolidone-carboxylate peptidase (215 aa).

Active-site residues include glutamate 80, cysteine 143, and histidine 167.

This sequence belongs to the peptidase C15 family. In terms of assembly, homotetramer.

It localises to the cytoplasm. The enzyme catalyses Release of an N-terminal pyroglutamyl group from a polypeptide, the second amino acid generally not being Pro.. Functionally, removes 5-oxoproline from various penultimate amino acid residues except L-proline. In Yersinia pseudotuberculosis serotype O:3 (strain YPIII), this protein is Pyrrolidone-carboxylate peptidase.